The following is a 397-amino-acid chain: Transcription factor xenB (397 aa).

The tract at residues 220–249 (TISDFETGDRQTISRSDTNSEVRPIPESPS) is disordered. Over residues 229-240 (RQTISRSDTNSE) the composition is skewed to polar residues.

Transcription factor; part of the gene cluster that mediates the biosynthesis of xenoacremones such as xenoacremone A, a compound that shows inhibitory activity toward the PI3K/AKT signaling pathway and which has the ability to induce apoptosis of A549 lung cancer cells. Acts as a positive regulator of the xenoacremones biosynthesis gene cluster. The chain is Transcription factor xenB from Xenoacremonium sinensis (Endophyte fungus).